A 229-amino-acid polypeptide reads, in one-letter code: Potassium/proton antiporter CemA (229 aa).

3 consecutive transmembrane segments (helical) span residues 7–27 (FTPL…SLSF), 107–127 (ILHF…SLLG), and 189–209 (IISG…KYWI).

The protein belongs to the CemA family.

The protein resides in the plastid. The protein localises to the chloroplast inner membrane. It catalyses the reaction K(+)(in) + H(+)(out) = K(+)(out) + H(+)(in). Its function is as follows. Contributes to K(+)/H(+) antiport activity by supporting proton efflux to control proton extrusion and homeostasis in chloroplasts in a light-dependent manner to modulate photosynthesis. Prevents excessive induction of non-photochemical quenching (NPQ) under continuous-light conditions. Indirectly promotes efficient inorganic carbon uptake into chloroplasts. The polypeptide is Potassium/proton antiporter CemA (Lactuca sativa (Garden lettuce)).